The following is a 356-amino-acid chain: MNKQNLLSLNQDALNDFFVCLGEKHYRTKQIMQWIYKVHEFDFDKMFNFSKSLREELNKIACIEFPKVVKQKFALDKVIKWVLALSEDNYIEMVYIPEKDRGTLCISSQVGCALACTFCSTGMQGFNKNLTTAEIIAQVLIANKYLNSKTKRISNIVFMGMGEPLLNEQAVYNACDLLLDDLAFGLSRRKVTISTSGIVPSILRMSKRTPVSLAISLHAPNNQLRDKLVPVNQKYSIEELLKACKVYLNAGTQERHILFEYVMLKDVNDSTEHANKLAKLLKAISAKVNLIPFNSFERTQYQSSNAQTIEKFQDILYQQGIRTMMRRTRGEDIDGACGQLAGKVLNKTKKLNARKH.

Catalysis depends on glutamate 92, which acts as the Proton acceptor. In terms of domain architecture, Radical SAM core spans 98-334 (EKDRGTLCIS…MRRTRGEDID (237 aa)). A disulfide bond links cysteine 105 and cysteine 337. Cysteine 112, cysteine 116, and cysteine 119 together coordinate [4Fe-4S] cluster. Residues 162 to 163 (GE), serine 194, 216 to 218 (SLH), and asparagine 294 contribute to the S-adenosyl-L-methionine site. Catalysis depends on cysteine 337, which acts as the S-methylcysteine intermediate.

The protein belongs to the radical SAM superfamily. RlmN family. [4Fe-4S] cluster is required as a cofactor.

Its subcellular location is the cytoplasm. It carries out the reaction adenosine(2503) in 23S rRNA + 2 reduced [2Fe-2S]-[ferredoxin] + 2 S-adenosyl-L-methionine = 2-methyladenosine(2503) in 23S rRNA + 5'-deoxyadenosine + L-methionine + 2 oxidized [2Fe-2S]-[ferredoxin] + S-adenosyl-L-homocysteine. The enzyme catalyses adenosine(37) in tRNA + 2 reduced [2Fe-2S]-[ferredoxin] + 2 S-adenosyl-L-methionine = 2-methyladenosine(37) in tRNA + 5'-deoxyadenosine + L-methionine + 2 oxidized [2Fe-2S]-[ferredoxin] + S-adenosyl-L-homocysteine. Its function is as follows. Specifically methylates position 2 of adenine 2503 in 23S rRNA and position 2 of adenine 37 in tRNAs. m2A2503 modification seems to play a crucial role in the proofreading step occurring at the peptidyl transferase center and thus would serve to optimize ribosomal fidelity. The sequence is that of Dual-specificity RNA methyltransferase RlmN from Vesicomyosocius okutanii subsp. Calyptogena okutanii (strain HA).